We begin with the raw amino-acid sequence, 130 residues long: MMYSKLLTLTTLLLPTALALPSLVERACDYTCGSNCYSSSDVSTAQAAGYQLHEDGETVGSNSYPHKYNNYEGFDFSVSSPYYEWPILSSGDVYSGGSPGADRVVFNENNQLAGVITHTGASGNNFVECT.

The N-terminal stretch at 1 to 26 (MMYSKLLTLTTLLLPTALALPSLVER) is a signal peptide. Cystine bridges form between Cys28/Cys36 and Cys32/Cys129. The active site involves His66. Glu84 (proton acceptor) is an active-site residue. Residue His118 is the Proton donor of the active site.

It belongs to the ribonuclease N1/T1 family. Monomer.

The enzyme catalyses [RNA] containing guanosine + H2O = an [RNA fragment]-3'-guanosine-3'-phosphate + a 5'-hydroxy-ribonucleotide-3'-[RNA fragment].. The polypeptide is Guanyl-specific ribonuclease T1 (rntA) (Aspergillus oryzae (strain ATCC 42149 / RIB 40) (Yellow koji mold)).